A 410-amino-acid chain; its full sequence is MAKKKEFRQAEVNIGMVGHVDHGKTTLTKALTGIWTDTHSEELRRGITIKIGFADAEIRKCPSCGRYSTSPICPYCGHETEFERRVSFIDAPGHEALMTTMLAGASLMDGAVLVIAANEGVMPQTREHLMALQIVGNKNIVIALNKIELVDREKVIERYQEIKEFVKGTVAENAPIIPISALHGANVDVLLAAIEEFIPTPEHDPNKPPKMLVLRSFDVNKPGTKPEKLVGGVIGGSIVQGKLKVGDEIEIRPGVPYEEHGRIKYEPITTEIVSLQAGGRFVEEAYPGGLVGVGTKLDPYLTKGDLMAGNVVGKPGQLPPVWDELRLEVHLLERVVGTEEELKVEPIKRREVLLLNVGTARTMGLVTGLGKDEIELKLQIPICAEVGDRVAISRQVGSRWRLIGYGFIRE.

One can recognise a tr-type G domain in the interval 9–202 (QAEVNIGMVG…AIEEFIPTPE (194 aa)). The interval 18–25 (GHVDHGKT) is G1. Residues D21, T25, G46, and T48 each contribute to the Mg(2+) site. 21–26 (DHGKTT) contacts GTP. The segment at 46 to 50 (GITIK) is G2. Zn(2+)-binding residues include C61, C64, C73, and C76. A G3 region spans residues 90 to 93 (DAPG). GTP is bound by residues 145-148 (NKIE) and 180-182 (SAL). The G4 stretch occupies residues 145 to 148 (NKIE). Residues 180 to 182 (SAL) are G5.

The protein belongs to the TRAFAC class translation factor GTPase superfamily. Classic translation factor GTPase family. EIF2G subfamily. As to quaternary structure, heterotrimer composed of an alpha, a beta and a gamma chain. Mg(2+) serves as cofactor.

The enzyme catalyses GTP + H2O = GDP + phosphate + H(+). Functionally, eIF-2 functions in the early steps of protein synthesis by forming a ternary complex with GTP and initiator tRNA. This Thermococcus onnurineus (strain NA1) protein is Translation initiation factor 2 subunit gamma.